The following is a 175-amino-acid chain: Disulfide bond formation protein B (175 aa).

The Cytoplasmic segment spans residues 1–13; sequence MVSNWLDAAPRRV. A helical transmembrane segment spans residues 14–30; that stretch reads LALISAACIAMLAFGMY. The Periplasmic segment spans residues 31–48; that stretch reads LQHVVGLEPCPMCIVQRY. Cys-40 and Cys-43 are oxidised to a cystine. The chain crosses the membrane as a helical span at residues 49 to 65; it reads ALIGVAVFTGLGSLRGG. The Cytoplasmic segment spans residues 66-70; that stretch reads RGWWM. A helical membrane pass occupies residues 71-88; it reads TWGVLALLLSGFGAFVAA. The Periplasmic segment spans residues 89–144; sequence RQSWLQWYPPEIATCGRDFYGMIENFPISRAIPMIFRGSGDCAAIDWTFLGGSIAN. Residues Cys-103 and Cys-130 are joined by a disulfide bond. Residues 145 to 163 form a helical membrane-spanning segment; that stretch reads WSFVCFVVMALVLLVMLLR. Topologically, residues 164–175 are cytoplasmic; the sequence is APRPARGGFSAA.

It belongs to the DsbB family.

It localises to the cell inner membrane. Functionally, required for disulfide bond formation in some periplasmic proteins. Acts by oxidizing the DsbA protein. The polypeptide is Disulfide bond formation protein B (Paracidovorax citrulli (strain AAC00-1) (Acidovorax citrulli)).